The sequence spans 302 residues: Beta-1,2-mannobiose phosphorylase (302 aa).

The protein belongs to the glycosyl hydrolase 130 family. Monomer.

The catalysed reaction is beta-D-mannopyranosyl-(1-&gt;2)-D-mannopyranose + phosphate = alpha-D-mannose 1-phosphate + D-mannose. The protein operates within nucleotide-sugar biosynthesis; GDP-alpha-D-mannose biosynthesis. Functionally, probably involved in a salvage pathway for GDP-D-mannose biosynthesis. Catalyzes the reversible phosphorolysis of 1,2-beta-oligomannan. In phosphorolytic reactions, prefers beta-1,2-mannobiose (beta-1,2-Man2) as substrate. Produces alpha-D-mannose 1-phosphate, which is the precursor of GDP-D-mannose. This chain is Beta-1,2-mannobiose phosphorylase, found in Thermoanaerobacter sp. (strain X514).